The primary structure comprises 117 residues: Large ribosomal subunit protein bL20 (117 aa).

This sequence belongs to the bacterial ribosomal protein bL20 family.

Binds directly to 23S ribosomal RNA and is necessary for the in vitro assembly process of the 50S ribosomal subunit. It is not involved in the protein synthesizing functions of that subunit. The sequence is that of Large ribosomal subunit protein bL20 from Maridesulfovibrio salexigens (strain ATCC 14822 / DSM 2638 / NCIMB 8403 / VKM B-1763) (Desulfovibrio salexigens).